The primary structure comprises 96 residues: Aspartyl/glutamyl-tRNA(Asn/Gln) amidotransferase subunit C (96 aa).

The protein belongs to the GatC family. As to quaternary structure, heterotrimer of A, B and C subunits.

The enzyme catalyses L-glutamyl-tRNA(Gln) + L-glutamine + ATP + H2O = L-glutaminyl-tRNA(Gln) + L-glutamate + ADP + phosphate + H(+). It carries out the reaction L-aspartyl-tRNA(Asn) + L-glutamine + ATP + H2O = L-asparaginyl-tRNA(Asn) + L-glutamate + ADP + phosphate + 2 H(+). Its function is as follows. Allows the formation of correctly charged Asn-tRNA(Asn) or Gln-tRNA(Gln) through the transamidation of misacylated Asp-tRNA(Asn) or Glu-tRNA(Gln) in organisms which lack either or both of asparaginyl-tRNA or glutaminyl-tRNA synthetases. The reaction takes place in the presence of glutamine and ATP through an activated phospho-Asp-tRNA(Asn) or phospho-Glu-tRNA(Gln). This chain is Aspartyl/glutamyl-tRNA(Asn/Gln) amidotransferase subunit C, found in Bacillus velezensis (strain DSM 23117 / BGSC 10A6 / LMG 26770 / FZB42) (Bacillus amyloliquefaciens subsp. plantarum).